The chain runs to 6995 residues: Fibrous sheath-interacting protein 2 (6995 aa).

3 disordered regions span residues 273–292, 308–336, and 351–476; these read EQKIEEQRRKSREESDRKKQ, DTGLKDDIGRNGFDYRGQNGTTFESSSKK, and GDQK…TDAP. Polar residues predominate over residues 359–396; sequence TSGQVSATVNQSQSSSKDVTKVSASSVTYPAEVQNSSS. The span at 397–421 shows a compositional bias: basic and acidic residues; sequence EQKRSEVTKRLSDERGKNSTDDSAR. The span at 424 to 442 shows a compositional bias: polar residues; that stretch reads IISTQLSPTRNAKLSQISL. Phosphoserine is present on Ser430. Residues 443-452 show a composition bias toward basic and acidic residues; it reads DHQKEEKEMK. Positions 453-463 are enriched in polar residues; the sequence is STWNGGLSKKS. Positions 665–692 form a coiled coil; that stretch reads LEISLLYDKKAKAMDQIKNLKNVFVNFK. Disordered stretches follow at residues 1452 to 1472, 2554 to 2595, 2699 to 2731, 3182 to 3270, 5489 to 5665, 5719 to 5740, 5823 to 5878, 5943 to 5996, and 6973 to 6995; these read PDPQPSCSHQNTETIDKDPPT, KSKR…VPQM, TKTKIKNKLSAGEKTPRESRSKTALGLPQTPQV, PVKM…PNFT, GPSA…KYKG, SKSSVKTDDRPMSKDKETMTEK, KDLS…SKSK, KEDE…PDKL, and SKVFSRSSGSIPKSSSPPHQDKR. The span at 2555–2565 shows a compositional bias: basic and acidic residues; it reads SKREGEMHDSS. The segment covering 3187-3204 has biased composition (polar residues); sequence PSNTSDTPRTRRSSQGSV. The span at 3220 to 3231 shows a compositional bias: low complexity; the sequence is SVTSNSSSHISS. Residues 3232–3250 are compositionally biased toward polar residues; that stretch reads CVENTNKSLEPMGRSNSEA. The span at 3255-3265 shows a compositional bias: basic residues; it reads SRHKAHDHGQR. Basic and acidic residues predominate over residues 5496–5509; the sequence is DAKKEDESKVKPAT. Composition is skewed to polar residues over residues 5523-5557, 5565-5625, and 5638-5650; these read MKSQGSQVQQLATSPPTSMKSQRIQVQQSVMSPPT, QVQQ…QSAM, and VQESSTSPPTTMK. Composition is skewed to basic and acidic residues over residues 5719–5738 and 5829–5877; these read SKSSVKTDDRPMSKDKETMT and GHRD…ESKS. The span at 5982–5993 shows a compositional bias: polar residues; it reads SDVQKTPEQSSP. Low complexity predominate over residues 6977–6995; that stretch reads SRSSGSIPKSSSPPHQDKR.

As to quaternary structure, may interact with AKAP4. In terms of tissue distribution, predominantly expressed in testis.

In terms of biological role, plays a role in spermatogenesis. The sequence is that of Fibrous sheath-interacting protein 2 (Fsip2) from Mus musculus (Mouse).